The primary structure comprises 424 residues: S-adenosylmethionine synthase (424 aa).

Residue H14 coordinates ATP. Residue D16 coordinates Mg(2+). E42 is a binding site for K(+). L-methionine is bound by residues E55 and Q98. Residues Q98–R108 are flexible loop. ATP is bound by residues D165–K167, K242–F243, D251, R257–K258, A274, and K278. An L-methionine-binding site is contributed by D251. K282 contributes to the L-methionine binding site.

It belongs to the AdoMet synthase family. Homotetramer; dimer of dimers. The cofactor is Mg(2+). K(+) serves as cofactor.

The protein resides in the cytoplasm. It carries out the reaction L-methionine + ATP + H2O = S-adenosyl-L-methionine + phosphate + diphosphate. It functions in the pathway amino-acid biosynthesis; S-adenosyl-L-methionine biosynthesis; S-adenosyl-L-methionine from L-methionine: step 1/1. Its function is as follows. Catalyzes the formation of S-adenosylmethionine (AdoMet) from methionine and ATP. The overall synthetic reaction is composed of two sequential steps, AdoMet formation and the subsequent tripolyphosphate hydrolysis which occurs prior to release of AdoMet from the enzyme. The polypeptide is S-adenosylmethionine synthase (Azobacteroides pseudotrichonymphae genomovar. CFP2).